Consider the following 493-residue polypeptide: Ribose import ATP-binding protein RbsA (493 aa).

ABC transporter domains lie at 3 to 239 and 252 to 493; these read IKMK…VGRE and GRVV…TGGR. 35–42 serves as a coordination point for ATP; the sequence is GENGAGKS.

It belongs to the ABC transporter superfamily. Ribose importer (TC 3.A.1.2.1) family. In terms of assembly, the complex is composed of an ATP-binding protein (RbsA), two transmembrane proteins (RbsC) and a solute-binding protein (RbsB).

The protein resides in the cell membrane. The enzyme catalyses D-ribose(out) + ATP + H2O = D-ribose(in) + ADP + phosphate + H(+). Its function is as follows. Part of the ABC transporter complex RbsABC involved in ribose import. Responsible for energy coupling to the transport system. In Bacillus licheniformis (strain ATCC 14580 / DSM 13 / JCM 2505 / CCUG 7422 / NBRC 12200 / NCIMB 9375 / NCTC 10341 / NRRL NRS-1264 / Gibson 46), this protein is Ribose import ATP-binding protein RbsA.